Here is a 213-residue protein sequence, read N- to C-terminus: Kynurenine formamidase (213 aa).

Residue W18 participates in substrate binding. Residues H48, H52, and D54 each coordinate Zn(2+). H58 functions as the Proton donor/acceptor in the catalytic mechanism. Zn(2+)-binding residues include H160 and E172.

Belongs to the Cyclase 1 superfamily. KynB family. In terms of assembly, homodimer. Requires Zn(2+) as cofactor.

The catalysed reaction is N-formyl-L-kynurenine + H2O = L-kynurenine + formate + H(+). Its pathway is amino-acid degradation; L-tryptophan degradation via kynurenine pathway; L-kynurenine from L-tryptophan: step 2/2. Functionally, catalyzes the hydrolysis of N-formyl-L-kynurenine to L-kynurenine, the second step in the kynurenine pathway of tryptophan degradation. The sequence is that of Kynurenine formamidase from Burkholderia vietnamiensis (strain G4 / LMG 22486) (Burkholderia cepacia (strain R1808)).